A 479-amino-acid chain; its full sequence is Glutamate--tRNA ligase (479 aa).

The 'HIGH' region motif lies at 11–21; sequence PSPTGYLHIGG. Residues C108, C110, C135, and E137 each coordinate Zn(2+). A 'KMSKS' region motif is present at residues 250–254; the sequence is KLSKR. K253 provides a ligand contact to ATP.

Belongs to the class-I aminoacyl-tRNA synthetase family. Glutamate--tRNA ligase type 1 subfamily. As to quaternary structure, monomer. It depends on Zn(2+) as a cofactor.

It is found in the cytoplasm. The catalysed reaction is tRNA(Glu) + L-glutamate + ATP = L-glutamyl-tRNA(Glu) + AMP + diphosphate. Catalyzes the attachment of glutamate to tRNA(Glu) in a two-step reaction: glutamate is first activated by ATP to form Glu-AMP and then transferred to the acceptor end of tRNA(Glu). The protein is Glutamate--tRNA ligase of Myxococcus xanthus (strain DK1622).